Reading from the N-terminus, the 315-residue chain is Methionyl-tRNA formyltransferase (315 aa).

Residue 113–116 participates in (6S)-5,6,7,8-tetrahydrofolate binding; it reads SLLP.

This sequence belongs to the Fmt family.

It carries out the reaction L-methionyl-tRNA(fMet) + (6R)-10-formyltetrahydrofolate = N-formyl-L-methionyl-tRNA(fMet) + (6S)-5,6,7,8-tetrahydrofolate + H(+). Attaches a formyl group to the free amino group of methionyl-tRNA(fMet). The formyl group appears to play a dual role in the initiator identity of N-formylmethionyl-tRNA by promoting its recognition by IF2 and preventing the misappropriation of this tRNA by the elongation apparatus. This chain is Methionyl-tRNA formyltransferase, found in Shigella flexneri serotype 5b (strain 8401).